Consider the following 218-residue polypeptide: Sec-independent protein translocase protein TatB (218 aa).

A helical membrane pass occupies residues 1-21 (MFDIGFSELLLVLVIGLVVLG). Disordered stretches follow at residues 126–145 (AESA…DVDK) and 174–218 (SSVD…GGDR). Residues 199 to 218 (HSTDSHGADQPRTHQPGGDR) show a composition bias toward basic and acidic residues.

Belongs to the TatB family. The Tat system comprises two distinct complexes: a TatABC complex, containing multiple copies of TatA, TatB and TatC subunits, and a separate TatA complex, containing only TatA subunits. Substrates initially bind to the TatABC complex, which probably triggers association of the separate TatA complex to form the active translocon.

The protein localises to the cell inner membrane. Functionally, part of the twin-arginine translocation (Tat) system that transports large folded proteins containing a characteristic twin-arginine motif in their signal peptide across membranes. Together with TatC, TatB is part of a receptor directly interacting with Tat signal peptides. TatB may form an oligomeric binding site that transiently accommodates folded Tat precursor proteins before their translocation. The chain is Sec-independent protein translocase protein TatB from Yersinia enterocolitica serotype O:8 / biotype 1B (strain NCTC 13174 / 8081).